A 575-amino-acid polypeptide reads, in one-letter code: Adenine deaminase 1 (575 aa).

Belongs to the metallo-dependent hydrolases superfamily. Adenine deaminase family. Requires Mn(2+) as cofactor.

It catalyses the reaction adenine + H2O + H(+) = hypoxanthine + NH4(+). The sequence is that of Adenine deaminase 1 from Agrobacterium fabrum (strain C58 / ATCC 33970) (Agrobacterium tumefaciens (strain C58)).